Consider the following 187-residue polypeptide: Probable DNA endonuclease SmrA (187 aa).

Residues 88 to 169 (LNLLRQPVEE…GSGACYVALR (82 aa)) enclose the Smr domain.

Has DNA endonuclease activity. Binds DNA. The polypeptide is Probable DNA endonuclease SmrA (smrA) (Escherichia coli (strain K12)).